The following is a 457-amino-acid chain: Phosphoglucosamine mutase (457 aa).

S106 (phosphoserine intermediate) is an active-site residue. S106, D245, D247, and D249 together coordinate Mg(2+). At S106 the chain carries Phosphoserine.

The protein belongs to the phosphohexose mutase family. The cofactor is Mg(2+). In terms of processing, activated by phosphorylation.

The enzyme catalyses alpha-D-glucosamine 1-phosphate = D-glucosamine 6-phosphate. Functionally, catalyzes the conversion of glucosamine-6-phosphate to glucosamine-1-phosphate. This Methylibium petroleiphilum (strain ATCC BAA-1232 / LMG 22953 / PM1) protein is Phosphoglucosamine mutase.